The chain runs to 53 residues: uncharacterized protein (53 aa).

Residues 20–42 form a helical membrane-spanning segment; sequence ILFPVLLVFDTILIVVGIALILF.

Its subcellular location is the membrane. This is an uncharacterized protein from Archaeoglobus fulgidus (strain ATCC 49558 / DSM 4304 / JCM 9628 / NBRC 100126 / VC-16).